The primary structure comprises 273 residues: Large ribosomal subunit protein uL2 (273 aa).

The interval 213-261 is disordered; that stretch reads WLGKRPQSRGVAMNPVDHPHGGGEGKSSGGRHPVTPWGVPTKGYKTRVN.

This sequence belongs to the universal ribosomal protein uL2 family. In terms of assembly, part of the 50S ribosomal subunit. Forms a bridge to the 30S subunit in the 70S ribosome.

In terms of biological role, one of the primary rRNA binding proteins. Required for association of the 30S and 50S subunits to form the 70S ribosome, for tRNA binding and peptide bond formation. It has been suggested to have peptidyltransferase activity; this is somewhat controversial. Makes several contacts with the 16S rRNA in the 70S ribosome. The sequence is that of Large ribosomal subunit protein uL2 from Syntrophotalea carbinolica (strain DSM 2380 / NBRC 103641 / GraBd1) (Pelobacter carbinolicus).